Consider the following 315-residue polypeptide: Zinc finger transcription factor ref-2 (315 aa).

The C2H2-type 1; atypical zinc-finger motif lies at 83-112; sequence VQCLWETNGQVCMHVCQNSGELSTHISSNH. Residues 124-146 form a C2H2-type 2; degenerate zinc finger; that stretch reads KGCDREFKMFKAKYKLVNHMRVH. C2H2-type zinc fingers lie at residues 152 to 174, 180 to 204, and 210 to 234; these read FLCD…KRIH, FQCT…MHVH, and YSCM…TKVH. The tract at residues 225–270 is disordered; it reads SSLRKHTKVHENEKKSQLSPEHDESSDSGNASIGTPTTDESLTFSP. Residues 233-249 show a composition bias toward basic and acidic residues; that stretch reads VHENEKKSQLSPEHDES. Residues 251–270 show a composition bias toward polar residues; it reads DSGNASIGTPTTDESLTFSP.

In terms of assembly, interacts with TCF transcription factor pop-1; the interaction is direct and facilitates transcriptional activation; transcription may be repressed by beta-catenin/sys-1.

It is found in the nucleus. The protein resides in the cytoplasm. Its function is as follows. Transcription factor. Modulates expression of target genes by binding to regulatory elements. Required for normal cell division timing and cell positioning in anterior lineages, acting in a cell-autonomous manner. Required for development, fusion and fate of cells of the ventral epidermis, the Pn.p cells, during larval development; acts in concert with homeobox genes lin-39 and mab-5. Required for the specification of the AIY interneuron. In complex with TCF transcription factor pop-1, positively modulates expression of LIM/homeobox protein ttx-3 in anterior daughter cells of the SMDD/AIY neuron lineage. This Caenorhabditis elegans protein is Zinc finger transcription factor ref-2.